The following is a 231-amino-acid chain: Probable caffeoyl-CoA O-methyltransferase 2 (231 aa).

Residues Thr53, Asp75, 77 to 78 (GV), Ser83, Asp101, Ala130, Asp152, Asp154, and Tyr161 contribute to the S-adenosyl-L-methionine site. Asp152 serves as a coordination point for a divalent metal cation. A divalent metal cation is bound by residues Asp178 and Asn179.

Belongs to the class I-like SAM-binding methyltransferase superfamily. Cation-dependent O-methyltransferase family. CCoAMT subfamily.

The enzyme catalyses (E)-caffeoyl-CoA + S-adenosyl-L-methionine = (E)-feruloyl-CoA + S-adenosyl-L-homocysteine + H(+). The polypeptide is Probable caffeoyl-CoA O-methyltransferase 2 (omt6) (Dictyostelium discoideum (Social amoeba)).